A 576-amino-acid polypeptide reads, in one-letter code: Adenine deaminase (576 aa).

The protein belongs to the metallo-dependent hydrolases superfamily. Adenine deaminase family. Mn(2+) is required as a cofactor.

The enzyme catalyses adenine + H2O + H(+) = hypoxanthine + NH4(+). This chain is Adenine deaminase, found in Bacillus pumilus (strain SAFR-032).